The following is a 308-amino-acid chain: MGAQIRELRRRIKSAGAIKKITKAQELIATSRIAKAQARVVAARPYATEITNVLTALADDAALDHPLLVERPEPKRAGVLIVSSDRGLCGGYNANVLRVAEELYALLREQGKTPVVYVVGRKALNYYSFRNRKVTEAWTGFSERPEYASAQKIADTLVEAFLAGADDEGDDPGLDGILGVDELHIVYTEFKSMLTQAAVAKRIAPMEVEYVGEAAGPTTQYSFEPDATTLFGALLPRYLATRVYAALLEAAASESASRRRAMKAATDNADELIKGLTLEANGARQAQITQEISEIVGGVNALADAAGH.

It belongs to the ATPase gamma chain family. F-type ATPases have 2 components, CF(1) - the catalytic core - and CF(0) - the membrane proton channel. CF(1) has five subunits: alpha(3), beta(3), gamma(1), delta(1), epsilon(1). CF(0) has three main subunits: a, b and c.

It localises to the cell membrane. Produces ATP from ADP in the presence of a proton gradient across the membrane. The gamma chain is believed to be important in regulating ATPase activity and the flow of protons through the CF(0) complex. The sequence is that of ATP synthase gamma chain from Mycobacteroides abscessus (strain ATCC 19977 / DSM 44196 / CCUG 20993 / CIP 104536 / JCM 13569 / NCTC 13031 / TMC 1543 / L948) (Mycobacterium abscessus).